The following is a 500-amino-acid chain: MQDQYILALDQGTTSSRAMLFDRQGNIVSIAQKEFEQIYPQPGWVEHDPQEIWSTQAGVAAEAVTRTGLNGTSIAAIGITNQRETTIVWDRETGQPVYNAIVWQDRRTADFCDSLKQQGLEAKVRAKTGLPIDSYFSATKIRWILDNVPGARDKARQGKLAFGTVDSWLVWNFTKHELHVTDVTNASRTMLFNIHTREWDSELLELLDIPRSMLPEVKASSEIYGHTKTTVFASKIPLAGIAGDQHAALFGQMCTTSGMVKNTYGTGCFLMMNTGDKPIESRNNLVTTIAWQIGDDVQYALEGSIFIAGAVVQWLRDGMGIIKTAAEIEALAARVPHTDGVYLVPAFAGLGAPHWNARARGSVFGVTRGTTSAHLARAALDAIAYQSLDVLAAMEADSGISIGELRVDGGASANNLLMQFQADLLGVDAVRPQITETTALGAAYLAGLAIGYWKNLDEVRSQWQLDRRFSPSMPKEQVKQCMAGWQRAVRAAKAWADDTQ.

T13 is a binding site for ADP. Residues T13, T14, and S15 each coordinate ATP. T13 contributes to the sn-glycerol 3-phosphate binding site. Position 17 (R17) interacts with ADP. Residues R83, E84, Y135, and D244 each contribute to the sn-glycerol 3-phosphate site. Glycerol is bound by residues R83, E84, Y135, D244, and Q245. T266 and G309 together coordinate ADP. 4 residues coordinate ATP: T266, G309, Q313, and G410. ADP contacts are provided by G410 and N414.

Belongs to the FGGY kinase family.

It catalyses the reaction glycerol + ATP = sn-glycerol 3-phosphate + ADP + H(+). Its pathway is polyol metabolism; glycerol degradation via glycerol kinase pathway; sn-glycerol 3-phosphate from glycerol: step 1/1. Inhibited by fructose 1,6-bisphosphate (FBP). Its function is as follows. Key enzyme in the regulation of glycerol uptake and metabolism. Catalyzes the phosphorylation of glycerol to yield sn-glycerol 3-phosphate. The polypeptide is Glycerol kinase (Burkholderia vietnamiensis (strain G4 / LMG 22486) (Burkholderia cepacia (strain R1808))).